The following is a 232-amino-acid chain: MQSTDISTNKIKFTVDKFNYVVKLSVLKNTHKITIKCTHNEEFYCWTFMTCEIIKSDYSSNSFYYDSSNSSINENINDENSNFLSINICPEMLFNILTAFKNNMLDKIYQINFPQDFDSVKSNLSILLTITLPLMNNFPDIKTIILEPKNINEPKRCSLKLMRQSFIIQQKNNEKFEKLSEKIEKMGKELTELQTVHNGLVKYIKEKYVRLDDLVDFVNKRDIDVITQVKKN.

The protein belongs to the mimivirus R73/L269/L862 family.

This is an uncharacterized protein from Acanthamoeba polyphaga mimivirus (APMV).